We begin with the raw amino-acid sequence, 218 residues long: Phosphatidylserine decarboxylase proenzyme (218 aa).

S183 functions as the Schiff-base intermediate with substrate; via pyruvic acid in the catalytic mechanism. The residue at position 183 (S183) is a Pyruvic acid (Ser); by autocatalysis.

Belongs to the phosphatidylserine decarboxylase family. PSD-A subfamily. In terms of assembly, heterodimer of a large membrane-associated beta subunit and a small pyruvoyl-containing alpha subunit. Pyruvate is required as a cofactor. In terms of processing, is synthesized initially as an inactive proenzyme. Formation of the active enzyme involves a self-maturation process in which the active site pyruvoyl group is generated from an internal serine residue via an autocatalytic post-translational modification. Two non-identical subunits are generated from the proenzyme in this reaction, and the pyruvate is formed at the N-terminus of the alpha chain, which is derived from the carboxyl end of the proenzyme. The post-translation cleavage follows an unusual pathway, termed non-hydrolytic serinolysis, in which the side chain hydroxyl group of the serine supplies its oxygen atom to form the C-terminus of the beta chain, while the remainder of the serine residue undergoes an oxidative deamination to produce ammonia and the pyruvoyl prosthetic group on the alpha chain.

It is found in the cell membrane. The catalysed reaction is a 1,2-diacyl-sn-glycero-3-phospho-L-serine + H(+) = a 1,2-diacyl-sn-glycero-3-phosphoethanolamine + CO2. It participates in phospholipid metabolism; phosphatidylethanolamine biosynthesis; phosphatidylethanolamine from CDP-diacylglycerol: step 2/2. Catalyzes the formation of phosphatidylethanolamine (PtdEtn) from phosphatidylserine (PtdSer). The protein is Phosphatidylserine decarboxylase proenzyme of Magnetococcus marinus (strain ATCC BAA-1437 / JCM 17883 / MC-1).